A 541-amino-acid chain; its full sequence is AT-rich interactive domain-containing protein 3A (541 aa).

The interval 17–172 (RLQQELEARQ…KHPNPQAFPT (156 aa)) is disordered. Over residues 55-73 (LKIQRAQAAALAAMRAAAA) the composition is skewed to low complexity. Positions 84 to 102 (SDEEEEDGESMASDEEDEK) are enriched in acidic residues. Over residues 103-112 (ERDGESERYP) the composition is skewed to basic and acidic residues. Residues 115–144 (GSEEEDLKGKWDEDDFEDEGEEDDYEDMEE) are compositionally biased toward acidic residues. An ARID domain is found at 212–304 (DPKRKEFLDD…YLYPYECEKR (93 aa)). In terms of domain architecture, REKLES spans 407 to 501 (AALEQLREKL…GVLFAQPPTS (95 aa)). The tract at residues 408 to 450 (ALEQLREKLESGEPPEKKMALGTEEQQRLQRAIQHNLLAMTAQ) is important for nuclear localization. The segment at 452–473 (PMNIRINSQAEGRQDSAVNLTT) is homodimerization. Positions 497 to 504 (QPPTSASG) are important for cytoplasmic localization. The disordered stretch occupies residues 499–541 (PTSASGTSKGSSNRTGSIGGGSSTSQAAPPPAPSAPTSNNPSP).

As to quaternary structure, homodimer.

It is found in the nucleus. It localises to the cytoplasm. Transcription factor required for smad1 and smad2-mediated responses to TGFbeta during mesoderm induction. The sequence is that of AT-rich interactive domain-containing protein 3A (arid3a) from Xenopus tropicalis (Western clawed frog).